Reading from the N-terminus, the 159-residue chain is UPF0178 protein AZC_4000 (159 aa).

Belongs to the UPF0178 family.

The sequence is that of UPF0178 protein AZC_4000 from Azorhizobium caulinodans (strain ATCC 43989 / DSM 5975 / JCM 20966 / LMG 6465 / NBRC 14845 / NCIMB 13405 / ORS 571).